Consider the following 339-residue polypeptide: Phenylalanine--tRNA ligase alpha subunit (339 aa).

Residue E254 coordinates Mg(2+).

The protein belongs to the class-II aminoacyl-tRNA synthetase family. Phe-tRNA synthetase alpha subunit type 1 subfamily. In terms of assembly, tetramer of two alpha and two beta subunits. Mg(2+) serves as cofactor.

Its subcellular location is the cytoplasm. It catalyses the reaction tRNA(Phe) + L-phenylalanine + ATP = L-phenylalanyl-tRNA(Phe) + AMP + diphosphate + H(+). The chain is Phenylalanine--tRNA ligase alpha subunit from Clostridium tetani (strain Massachusetts / E88).